The primary structure comprises 217 residues: Adenylate kinase (217 aa).

11-16 (GSGKGT) is an ATP binding site. The NMP stretch occupies residues 31–61 (STGTMLRQALTRSTHKSYELHKNIMHTGDLV). AMP contacts are provided by residues Thr32, Arg37, 59 to 61 (DLV), 87 to 90 (GFPR), and Gln94. The LID stretch occupies residues 124–161 (GRRIHVGSGRTYHIKFNPPRNYGLDDITGEILTTRKDD). ATP contacts are provided by residues Arg125 and 134–135 (TY). Positions 158 and 169 each coordinate AMP. Residue Arg202 coordinates ATP.

It belongs to the adenylate kinase family. Monomer.

The protein localises to the cytoplasm. The enzyme catalyses AMP + ATP = 2 ADP. It functions in the pathway purine metabolism; AMP biosynthesis via salvage pathway; AMP from ADP: step 1/1. Functionally, catalyzes the reversible transfer of the terminal phosphate group between ATP and AMP. Plays an important role in cellular energy homeostasis and in adenine nucleotide metabolism. This is Adenylate kinase from Blochmanniella pennsylvanica (strain BPEN).